The sequence spans 241 residues: Protein McbE (241 aa).

6 helical membrane passes run 17–35, 54–72, 105–123, 131–149, 163–181, and 212–230; these read TPFSLIWTIMSPTVLFFFL, ISWFVGYISFSVVLFNYCL, LIMSILYVFFFILVVLTGF, IVMIILKSIYINAFMMVSL, STIYSVLITVCMVSGIVSL, and LMTIFFYSIMLIISIISAL.

It localises to the cell membrane. Its function is as follows. Together with two further proteins McbF and McbG this protein causes immunity to the peptide antibiotic microcin B17 (MccB17), which inhibits DNA replication in enterobacteriaceae. Immunity is determined by two different mechanisms. McbE is involved in the production of extracellular MccB17 and, in a complex with McbF it also serves as 'pump' for the export of active MccB17 from the cytoplasm to the periplasmic space. This chain is Protein McbE (mcbE), found in Escherichia coli.